Consider the following 86-residue polypeptide: Small ribosomal subunit protein bS16 (86 aa).

This sequence belongs to the bacterial ribosomal protein bS16 family.

The chain is Small ribosomal subunit protein bS16 from Acidithiobacillus ferrooxidans (strain ATCC 23270 / DSM 14882 / CIP 104768 / NCIMB 8455) (Ferrobacillus ferrooxidans (strain ATCC 23270)).